The following is a 489-amino-acid chain: UDP-N-acetylmuramate--L-alanine ligase (489 aa).

128–134 contributes to the ATP binding site; sequence GTHGKTT.

Belongs to the MurCDEF family.

The protein resides in the cytoplasm. It carries out the reaction UDP-N-acetyl-alpha-D-muramate + L-alanine + ATP = UDP-N-acetyl-alpha-D-muramoyl-L-alanine + ADP + phosphate + H(+). It participates in cell wall biogenesis; peptidoglycan biosynthesis. Cell wall formation. This Shewanella halifaxensis (strain HAW-EB4) protein is UDP-N-acetylmuramate--L-alanine ligase.